We begin with the raw amino-acid sequence, 124 residues long: Large ribosomal subunit protein bL12 (124 aa).

This sequence belongs to the bacterial ribosomal protein bL12 family. As to quaternary structure, homodimer. Part of the ribosomal stalk of the 50S ribosomal subunit. Forms a multimeric L10(L12)X complex, where L10 forms an elongated spine to which 2 to 4 L12 dimers bind in a sequential fashion. Binds GTP-bound translation factors.

Functionally, forms part of the ribosomal stalk which helps the ribosome interact with GTP-bound translation factors. Is thus essential for accurate translation. This chain is Large ribosomal subunit protein bL12, found in Nautilia profundicola (strain ATCC BAA-1463 / DSM 18972 / AmH).